The sequence spans 840 residues: MAEKISPGMQQYLDIKQDYPDAFLLFRMGDFYELFYEDAVNAAQILELTLTSRNKNSENPIPMAGVPHHAATEYIDKLVDLGYKVAVAEQMEDPKKAVGIVKRAVTQVITPGTTIDTANSVDNNFLVAIDFKAKRYALSYMDLSTGEFKVTELSEFSAVVGGIASLKAREIVVGFPLDEAQVKVFERQMNLLISEQFEIPENLLIELSGLTALENQAASKLLAYVKETQMRDLSHLQEVEHYEIKDFLQLDFATKSSLELTANKRENKKHGTLYWLLDETKTAMGTRMLRSWIDRPLVSNSAIQKRMEIVQVFLDHFFERSDLIEALKGVYDLERLASRVSFGKAVPVDFLQLANSLSNVPAIKNILEVLDETSLNELRSQLDEIPELSGLINSAISENASRTITEGGIIKKGYNVQLDKYREALENGTSWIAKLEADEKAKTGISTLRIDYNRKDGYYFHITQSQLNSVPEHFYRKATLKNSERFGSQELTEIEEIMLEAREKSSSLEYDLFMGLRAETEQYIGRLQALAKTIAEIDCLQSLSVVAEKQGYIRPTLTEGSRIVEIKGGRHAVVEAVMGAQEYVPNDIELPEQTDIQLITGPNMSGKSTYMRQFALTVIMAQIGSFVPAKTANLPIFDAIFTRIGASDNLISGESTFMVEMSEANHAIQKATSRSLIIFDELGRGTATYDGMALAQAIIEYVHEYIGAKTLFATHYHELTDLDKELDHLDNVHVATLEQNGNVTFLHKITDGPADKSYGIHVAKIAGLPQTLLERADLILQKLENKPLPAKKIADEQEQLSLFDFAENSSEIIEKIKGQNVDNMTAREALNFLWELKDSL.

An ATP-binding site is contributed by 601–608 (GPNMSGKS).

This sequence belongs to the DNA mismatch repair MutS family.

This protein is involved in the repair of mismatches in DNA. It is possible that it carries out the mismatch recognition step. This protein has a weak ATPase activity. The chain is DNA mismatch repair protein MutS from Lactococcus lactis subsp. cremoris (strain SK11).